The sequence spans 508 residues: Steroid 17-alpha-hydroxylase/17,20 lyase (508 aa).

Cys442 serves as a coordination point for heme.

The protein belongs to the cytochrome P450 family. It depends on heme as a cofactor.

Its subcellular location is the endoplasmic reticulum membrane. The protein localises to the microsome membrane. The catalysed reaction is a C21-steroid + reduced [NADPH--hemoprotein reductase] + O2 = a 17alpha-hydroxy-C21-steroid + oxidized [NADPH--hemoprotein reductase] + H2O + H(+). It catalyses the reaction progesterone + reduced [NADPH--hemoprotein reductase] + O2 = 17alpha-hydroxyprogesterone + oxidized [NADPH--hemoprotein reductase] + H2O + H(+). It carries out the reaction pregnenolone + reduced [NADPH--hemoprotein reductase] + O2 = 17alpha-hydroxypregnenolone + oxidized [NADPH--hemoprotein reductase] + H2O + H(+). The enzyme catalyses 17alpha-hydroxyprogesterone + reduced [NADPH--hemoprotein reductase] + O2 = androst-4-ene-3,17-dione + acetate + oxidized [NADPH--hemoprotein reductase] + H2O + 2 H(+). The catalysed reaction is 17alpha-hydroxyprogesterone + reduced [NADPH--hemoprotein reductase] + O2 = 16alpha,17alpha-dihydroxyprogesterone + oxidized [NADPH--hemoprotein reductase] + H2O + H(+). It catalyses the reaction 16alpha,17alpha-dihydroxyprogesterone + reduced [NADPH--hemoprotein reductase] + O2 = 6beta,16alpha,17alpha-trihydroxyprogesterone + oxidized [NADPH--hemoprotein reductase] + H2O + H(+). It carries out the reaction 17alpha-hydroxypregnenolone + reduced [NADPH--hemoprotein reductase] + O2 = 3beta-hydroxyandrost-5-en-17-one + acetate + oxidized [NADPH--hemoprotein reductase] + H2O + 2 H(+). The enzyme catalyses 16alpha,17alpha-dihydroxypregnenolone + reduced [NADPH--hemoprotein reductase] + O2 = 3beta,16alpha-dihydroxy-androst-5-en-17-one + acetate + oxidized [NADPH--hemoprotein reductase] + H2O + 2 H(+). The catalysed reaction is 3beta-hydroxyandrost-5-en-17-one + reduced [NADPH--hemoprotein reductase] + O2 = 3beta,16alpha-dihydroxy-androst-5-en-17-one + oxidized [NADPH--hemoprotein reductase] + H2O + H(+). It catalyses the reaction androst-4-ene-3,17-dione + reduced [NADPH--hemoprotein reductase] + O2 = 16alpha-hydroxyandrost-4-ene-3,17-dione + oxidized [NADPH--hemoprotein reductase] + H2O + H(+). It participates in steroid hormone biosynthesis. The protein operates within steroid biosynthesis; glucocorticoid biosynthesis. Its activity is regulated as follows. Regulated predominantly by intracellular cAMP levels. The 17,20-lyase activity is stimulated by cytochrome b5, which acts as an allosteric effector increasing the Vmax of the lyase activity. A cytochrome P450 monooxygenase involved in corticoid and androgen biosynthesis. Catalyzes 17-alpha hydroxylation of C21 steroids, which is common for both pathways. A second oxidative step, required only for androgen synthesis, involves an acyl-carbon cleavage. The 17-alpha hydroxy intermediates, as part of adrenal glucocorticoids biosynthesis pathway, are precursors of cortisol. Hydroxylates steroid hormones, pregnenolone and progesterone to form 17-alpha hydroxy metabolites, followed by the cleavage of the C17-C20 bond to form C19 steroids, dehydroepiandrosterone (DHEA) and androstenedione. Has 16-alpha hydroxylase activity. Catalyzes 16-alpha hydroxylation of 17-alpha hydroxy pregnenolone, followed by the cleavage of the C17-C20 bond to form 16-alpha-hydroxy DHEA. Also 16-alpha hydroxylates androgens, relevant for estriol synthesis. Mechanistically, uses molecular oxygen inserting one oxygen atom into a substrate, and reducing the second into a water molecule, with two electrons provided by NADPH via cytochrome P450 reductase (CPR; NADPH-ferrihemoprotein reductase). In Equus caballus (Horse), this protein is Steroid 17-alpha-hydroxylase/17,20 lyase (CYP17A1).